Consider the following 213-residue polypeptide: Pyridoxine/pyridoxamine 5'-phosphate oxidase (213 aa).

FMN contacts are provided by residues 60–65 (RMVLMK), 75–76 (YS), Lys82, and Gln104. Lys65 is a binding site for substrate. Substrate-binding residues include Tyr122 and Arg126. FMN contacts are provided by residues 139 to 140 (QS) and Trp184. Substrate is bound at residue 190–192 (RLH). Arg194 serves as a coordination point for FMN.

It belongs to the pyridoxamine 5'-phosphate oxidase family. As to quaternary structure, homodimer. It depends on FMN as a cofactor.

It carries out the reaction pyridoxamine 5'-phosphate + O2 + H2O = pyridoxal 5'-phosphate + H2O2 + NH4(+). It catalyses the reaction pyridoxine 5'-phosphate + O2 = pyridoxal 5'-phosphate + H2O2. It participates in cofactor metabolism; pyridoxal 5'-phosphate salvage; pyridoxal 5'-phosphate from pyridoxamine 5'-phosphate: step 1/1. It functions in the pathway cofactor metabolism; pyridoxal 5'-phosphate salvage; pyridoxal 5'-phosphate from pyridoxine 5'-phosphate: step 1/1. Catalyzes the oxidation of either pyridoxine 5'-phosphate (PNP) or pyridoxamine 5'-phosphate (PMP) into pyridoxal 5'-phosphate (PLP). In Nitrobacter hamburgensis (strain DSM 10229 / NCIMB 13809 / X14), this protein is Pyridoxine/pyridoxamine 5'-phosphate oxidase.